The primary structure comprises 95 residues: Probable FAD-linked sulfhydryl oxidase OPG072 (95 aa).

The Intravirion portion of the chain corresponds to 1–8 (MNPKHWGR). Residues 1–95 (MNPKHWGRAV…AIDVSKVKPL (95 aa)) form the ERV/ALR sulfhydryl oxidase domain. Residues 9 to 25 (AVWTIIFIVLSQAGLDG) traverse the membrane as a helical segment. Topologically, residues 26–95 (NIEACKRKLY…AIDVSKVKPL (70 aa)) are virion surface. The cysteines at positions 43 and 46 are disulfide-linked.

The protein belongs to the orthopoxvirus OPG072 family. In terms of assembly, interacts with OPG128; this interaction involves formation of a transient disulfide-bonded intermediate, allowing disulfide bond transfer. The cofactor is FAD.

The protein localises to the virion membrane. Its subcellular location is the host cytoplasm. It carries out the reaction 2 R'C(R)SH + O2 = R'C(R)S-S(R)CR' + H2O2. FAD-dependent sulfhydryl oxidase that catalyzes disulfide bond formation. The complete pathway for formation of disulfide bonds in intracellular virion membrane proteins sequentially involves thiol-disulfide transfer between OPG072, OPG128 and OPG088. In Monkeypox virus, this protein is Probable FAD-linked sulfhydryl oxidase OPG072 (OPG072).